A 250-amino-acid polypeptide reads, in one-letter code: Ino eighty subunit 3 (250 aa).

The interval 29–70 (PDFLEKDPHHKKFHNADGLNQQGSSTPSTATDANAASTASTH) is disordered. Over residues 52–70 (SSTPSTATDANAASTASTH) the composition is skewed to low complexity. Ser-157 and Ser-211 each carry phosphoserine.

Component of the chromatin-remodeling INO80 complex, at least composed of ARP4, ARP5, ARP8, RVB1, RVB2, TAF14, NHP10, IES1, IES3, IES4, IES6, ACT1, IES2, IES5 and INO80.

The protein resides in the nucleus. Functionally, probably involved in transcription regulation via its interaction with the INO80 complex, a chromatin-remodeling complex. The chain is Ino eighty subunit 3 (IES3) from Saccharomyces cerevisiae (strain ATCC 204508 / S288c) (Baker's yeast).